A 403-amino-acid chain; its full sequence is Queuine tRNA-ribosyltransferase catalytic subunit 1 (403 aa).

Alanine 2 bears the N-acetylalanine mark. Aspartate 105 (proton acceptor) is an active-site residue. A queuine-binding site is contributed by 105–109 (DSGGF). Position 139 is a phosphoserine (serine 139). 3 residues coordinate queuine: aspartate 159, glutamine 202, and glycine 229. The RNA binding stretch occupies residues 260–266 (GVGYATD). Residue aspartate 279 is the Nucleophile of the active site. The segment at 284 to 288 (TRTAR) is RNA binding; important for wobble base 34 recognition. 4 residues coordinate Zn(2+): cysteine 317, cysteine 319, cysteine 322, and histidine 348.

This sequence belongs to the queuine tRNA-ribosyltransferase family. In terms of assembly, heterodimer of a catalytic subunit QTRT1 and an accessory subunit QTRT2. Zn(2+) is required as a cofactor. As to expression, expressed in brain, heart, kidney, liver, ling, skeletal muscle, spleen and testis.

The protein resides in the cytoplasm. Its subcellular location is the mitochondrion outer membrane. It localises to the nucleus. The enzyme catalyses guanosine(34) in tRNA + queuine = queuosine(34) in tRNA + guanine. Functionally, catalytic subunit of the queuine tRNA-ribosyltransferase (TGT) that catalyzes the base-exchange of a guanine (G) residue with queuine (Q) at position 34 (anticodon wobble position) in tRNAs with GU(N) anticodons (tRNA-Asp, -Asn, -His and -Tyr), resulting in the hypermodified nucleoside queuosine (7-(((4,5-cis-dihydroxy-2-cyclopenten-1-yl)amino)methyl)-7-deazaguanosine). Catalysis occurs through a double-displacement mechanism. The nucleophile active site attacks the C1' of nucleotide 34 to detach the guanine base from the RNA, forming a covalent enzyme-RNA intermediate. The proton acceptor active site deprotonates the incoming queuine, allowing a nucleophilic attack on the C1' of the ribose to form the product. Modification of cytoplasmic tRNAs with queuosine controls the elongation speed of cognate codons, thereby ensuring the correct folding of nascent proteins to maintain proteome integrity. This chain is Queuine tRNA-ribosyltransferase catalytic subunit 1, found in Mus musculus (Mouse).